The primary structure comprises 339 residues: Biotin synthase (339 aa).

A Radical SAM core domain is found at 47 to 276; sequence FYGKKVKLNM…SKEIRISGGR (230 aa). [4Fe-4S] cluster is bound by residues Cys-65, Cys-69, and Cys-72. [2Fe-2S] cluster contacts are provided by Cys-109, Cys-141, Cys-201, and Arg-271.

The protein belongs to the radical SAM superfamily. Biotin synthase family. As to quaternary structure, homodimer. It depends on [4Fe-4S] cluster as a cofactor. [2Fe-2S] cluster is required as a cofactor.

It carries out the reaction (4R,5S)-dethiobiotin + (sulfur carrier)-SH + 2 reduced [2Fe-2S]-[ferredoxin] + 2 S-adenosyl-L-methionine = (sulfur carrier)-H + biotin + 2 5'-deoxyadenosine + 2 L-methionine + 2 oxidized [2Fe-2S]-[ferredoxin]. The protein operates within cofactor biosynthesis; biotin biosynthesis; biotin from 7,8-diaminononanoate: step 2/2. In terms of biological role, catalyzes the conversion of dethiobiotin (DTB) to biotin by the insertion of a sulfur atom into dethiobiotin via a radical-based mechanism. This is Biotin synthase from Bacillus velezensis (strain DSM 23117 / BGSC 10A6 / LMG 26770 / FZB42) (Bacillus amyloliquefaciens subsp. plantarum).